Consider the following 143-residue polypeptide: Transcriptional regulator MraZ (143 aa).

SpoVT-AbrB domains follow at residues 5-47 and 76-119; these read EYHH…SMEE and AMES…AKER.

This sequence belongs to the MraZ family. As to quaternary structure, forms oligomers.

It is found in the cytoplasm. The protein resides in the nucleoid. This is Transcriptional regulator MraZ from Lactobacillus helveticus (strain DPC 4571).